Reading from the N-terminus, the 442-residue chain is Cell division protein FtsZ (442 aa).

Residues 18 to 22, 105 to 107, E136, R140, and D184 each bind GTP; these read GGGVN and GTG. A compositionally biased stretch (low complexity) spans 329-341; the sequence is AAPAAEPVQQQVP. Residues 329 to 442 are disordered; the sequence is AAPAAEPVQQ…DDLDVPSFLQ (114 aa). 2 stretches are compositionally biased toward basic and acidic residues: residues 349-362 and 390-431; these read PEKESIFGGAREEN and NDRD…RDDR.

The protein belongs to the FtsZ family. As to quaternary structure, homodimer. Polymerizes to form a dynamic ring structure in a strictly GTP-dependent manner. Interacts directly with several other division proteins.

The protein resides in the cytoplasm. Functionally, essential cell division protein that forms a contractile ring structure (Z ring) at the future cell division site. The regulation of the ring assembly controls the timing and the location of cell division. One of the functions of the FtsZ ring is to recruit other cell division proteins to the septum to produce a new cell wall between the dividing cells. Binds GTP and shows GTPase activity. This is Cell division protein FtsZ from Corynebacterium glutamicum (strain ATCC 13032 / DSM 20300 / JCM 1318 / BCRC 11384 / CCUG 27702 / LMG 3730 / NBRC 12168 / NCIMB 10025 / NRRL B-2784 / 534).